The primary structure comprises 445 residues: Tubulin beta chain (445 aa).

8 residues coordinate GTP: glutamine 11, glutamate 69, serine 138, glycine 142, threonine 143, glycine 144, asparagine 204, and asparagine 226. Residue glutamate 69 participates in Mg(2+) binding.

It belongs to the tubulin family. As to quaternary structure, dimer of alpha and beta chains. A typical microtubule is a hollow water-filled tube with an outer diameter of 25 nm and an inner diameter of 15 nM. Alpha-beta heterodimers associate head-to-tail to form protofilaments running lengthwise along the microtubule wall with the beta-tubulin subunit facing the microtubule plus end conferring a structural polarity. Microtubules usually have 13 protofilaments but different protofilament numbers can be found in some organisms and specialized cells. It depends on Mg(2+) as a cofactor.

It is found in the cytoplasm. The protein localises to the cytoskeleton. Tubulin is the major constituent of microtubules, a cylinder consisting of laterally associated linear protofilaments composed of alpha- and beta-tubulin heterodimers. Microtubules grow by the addition of GTP-tubulin dimers to the microtubule end, where a stabilizing cap forms. Below the cap, tubulin dimers are in GDP-bound state, owing to GTPase activity of alpha-tubulin. The sequence is that of Tubulin beta chain from Leishmania mexicana.